We begin with the raw amino-acid sequence, 364 residues long: Alanine racemase (364 aa).

The active-site Proton acceptor; specific for D-alanine is the Lys-35. Lys-35 carries the post-translational modification N6-(pyridoxal phosphate)lysine. Substrate is bound at residue Arg-136. Tyr-261 functions as the Proton acceptor; specific for L-alanine in the catalytic mechanism. Residue Met-309 coordinates substrate.

This sequence belongs to the alanine racemase family. Requires pyridoxal 5'-phosphate as cofactor.

The catalysed reaction is L-alanine = D-alanine. It functions in the pathway amino-acid biosynthesis; D-alanine biosynthesis; D-alanine from L-alanine: step 1/1. Its function is as follows. Catalyzes the interconversion of L-alanine and D-alanine. May also act on other amino acids. The sequence is that of Alanine racemase (alr) from Shewanella amazonensis (strain ATCC BAA-1098 / SB2B).